The primary structure comprises 254 residues: Flagellar L-ring protein 1 (254 aa).

An N-terminal signal peptide occupies residues 1 to 26; it reads MSPFSSAFRPRRIAISALLLAIGALA.

It belongs to the FlgH family. In terms of assembly, the basal body constitutes a major portion of the flagellar organelle and consists of four rings (L,P,S, and M) mounted on a central rod.

It is found in the cell outer membrane. The protein resides in the bacterial flagellum basal body. Assembles around the rod to form the L-ring and probably protects the motor/basal body from shearing forces during rotation. In Bradyrhizobium diazoefficiens (strain JCM 10833 / BCRC 13528 / IAM 13628 / NBRC 14792 / USDA 110), this protein is Flagellar L-ring protein 1 (flgH1).